Here is a 146-residue protein sequence, read N- to C-terminus: Hemoglobin subunit beta-C (146 aa).

The 145-residue stretch at Glu-2 to His-146 folds into the Globin domain. Residues His-63 and His-92 each contribute to the heme b site.

It belongs to the globin family. In terms of assembly, hbC is a heterotetramer of two alpha chains and two beta-C chains. Red blood cells.

Functionally, involved in oxygen transport from gills to the various peripheral tissues. In Trematomus bernacchii (Emerald rockcod), this protein is Hemoglobin subunit beta-C (hbbc).